A 314-amino-acid polypeptide reads, in one-letter code: 2,3-dihydroxyphenylpropionate/2,3-dihydroxicinnamic acid 1,2-dioxygenase (314 aa).

The Proton donor role is filled by histidine 115. Histidine 179 serves as the catalytic Proton acceptor.

Belongs to the LigB/MhpB extradiol dioxygenase family. Homotetramer. The cofactor is Fe(2+).

It catalyses the reaction 3-(2,3-dihydroxyphenyl)propanoate + O2 = (2Z,4E)-2-hydroxy-6-oxonona-2,4-dienedioate + H(+). The enzyme catalyses (2E)-3-(2,3-dihydroxyphenyl)prop-2-enoate + O2 = (2Z,4E,7E)-2-hydroxy-6-oxonona-2,4,7-trienedioate + H(+). Its pathway is aromatic compound metabolism; 3-phenylpropanoate degradation. Catalyzes the non-heme iron(II)-dependent oxidative cleavage of 2,3-dihydroxyphenylpropionic acid and 2,3-dihydroxicinnamic acid into 2-hydroxy-6-ketononadienedioate and 2-hydroxy-6-ketononatrienedioate, respectively. The protein is 2,3-dihydroxyphenylpropionate/2,3-dihydroxicinnamic acid 1,2-dioxygenase of Escherichia coli O139:H28 (strain E24377A / ETEC).